A 247-amino-acid chain; its full sequence is MARSKRTIKMQIEYDGTGYSGWQRQPGDVVTVQGEIERVLERIMQEPVSIDGAGRTDSGVHARRQVASFATCSPMPLGRLIYSANSLLPSTIRINAMRQAPESFHARFSATSREYRYFLLEHPSAIDSRFAGCSHGKPDVGAMNRLALMLIGTHDFAAFSKETPDQYGTLCTVTAARWYRSGRFHVFRIEANRFLRSMVRFLVAGMIEVGMGRLEEGAFARMLESGHRPPKLKPADAAGLFLWKVRY.

Catalysis depends on Asp-57, which acts as the Nucleophile. Residue Tyr-115 coordinates substrate.

The protein belongs to the tRNA pseudouridine synthase TruA family. In terms of assembly, homodimer.

The catalysed reaction is uridine(38/39/40) in tRNA = pseudouridine(38/39/40) in tRNA. In terms of biological role, formation of pseudouridine at positions 38, 39 and 40 in the anticodon stem and loop of transfer RNAs. The polypeptide is tRNA pseudouridine synthase A (Chlorobaculum tepidum (strain ATCC 49652 / DSM 12025 / NBRC 103806 / TLS) (Chlorobium tepidum)).